Here is a 259-residue protein sequence, read N- to C-terminus: MLTVISPAKTLDYDTPPVTERFTLPQYLDESQALIQQLRELSPAQISELMHLSDKLAGLNAARFGSWTPDFTPANAKQALLAFKGDVYTGLDAESLSEDDFSYAQGHLRMLSGLYGLLRPLDLMQPYRLEMGTKLANARGKDLYAFWGTRISEWLNQALADQGDDVLLNLASNEYFSAVKRSALKARVINVDFKDQKNGQYKIISFYAKKARGMMSRFVIQQRISTPEQLKQFDAQGYYYSAEQSKPDHLVFLRDHPAE.

Belongs to the UPF0246 family.

This Pseudomonas putida (strain ATCC 47054 / DSM 6125 / CFBP 8728 / NCIMB 11950 / KT2440) protein is UPF0246 protein PP_1289.